The following is a 268-amino-acid chain: MLLAVDIGNTNITAGLFLEDELICMWRMASNRAETWDEYGLQLIQLLERDGHTPADITCAAMASVVPPLNPVLSRAVQQYLKVQLKELTGDLRSLPAVRYDNPAALGTDRLVNALAGWEIYGRPQGRPVIVVDFGTATKLECVSAEGEYLGGVIAPGIRTAAEALTRRTALLQRVEIQRPKSVIGRNIAASMQSGILYGFAGLADGLVRRLTQEIAPDGPDPVVVATGGLASMVAVESRTIQMVDPHLTLQGIRLMYELNWPDAAAEA.

Asp6–Thr13 is a binding site for ATP. Substrate-binding positions include Tyr100 and Gly107–Arg110. The active-site Proton acceptor is the Asp109. K(+) is bound at residue Asp133. ATP is bound at residue Thr136.

The protein belongs to the type III pantothenate kinase family. In terms of assembly, homodimer. NH4(+) is required as a cofactor. The cofactor is K(+).

It localises to the cytoplasm. It catalyses the reaction (R)-pantothenate + ATP = (R)-4'-phosphopantothenate + ADP + H(+). The protein operates within cofactor biosynthesis; coenzyme A biosynthesis; CoA from (R)-pantothenate: step 1/5. Functionally, catalyzes the phosphorylation of pantothenate (Pan), the first step in CoA biosynthesis. This Symbiobacterium thermophilum (strain DSM 24528 / JCM 14929 / IAM 14863 / T) protein is Type III pantothenate kinase 1.